A 200-amino-acid polypeptide reads, in one-letter code: Phosphoheptose isomerase (200 aa).

An SIS domain is found at 37–199 (VLGCITAGGK…DVQLLGEQDL (163 aa)). A substrate-binding site is contributed by 52–54 (NGG). The Zn(2+) site is built by His-61 and Glu-65. Substrate-binding positions include Glu-65, 94 to 95 (ND), 120 to 122 (TTS), Ser-125, and Gln-175. Residues Gln-175 and His-183 each contribute to the Zn(2+) site.

This sequence belongs to the SIS family. GmhA subfamily. As to quaternary structure, homotetramer. It depends on Zn(2+) as a cofactor.

It is found in the cytoplasm. It carries out the reaction 2 D-sedoheptulose 7-phosphate = D-glycero-alpha-D-manno-heptose 7-phosphate + D-glycero-beta-D-manno-heptose 7-phosphate. It functions in the pathway carbohydrate biosynthesis; D-glycero-D-manno-heptose 7-phosphate biosynthesis; D-glycero-alpha-D-manno-heptose 7-phosphate and D-glycero-beta-D-manno-heptose 7-phosphate from sedoheptulose 7-phosphate: step 1/1. Functionally, catalyzes the isomerization of sedoheptulose 7-phosphate in D-glycero-D-manno-heptose 7-phosphate. The protein is Phosphoheptose isomerase of Methylibium petroleiphilum (strain ATCC BAA-1232 / LMG 22953 / PM1).